The chain runs to 955 residues: Leucine--tRNA ligase (955 aa).

Positions 51-61 (PYLNGVLHAGH) match the 'HIGH' region motif. The 'KMSKS' region motif lies at 647–651 (KLSKS). Lys650 is a binding site for ATP.

Belongs to the class-I aminoacyl-tRNA synthetase family.

The protein resides in the cytoplasm. The enzyme catalyses tRNA(Leu) + L-leucine + ATP = L-leucyl-tRNA(Leu) + AMP + diphosphate. This chain is Leucine--tRNA ligase, found in Methanococcus maripaludis (strain DSM 14266 / JCM 13030 / NBRC 101832 / S2 / LL).